Reading from the N-terminus, the 352-residue chain is Cyclin-dependent kinase-like 1 (352 aa).

In terms of domain architecture, Protein kinase spans 4–287 (YEKIGKIGEG…CEQLLQHPYF (284 aa)). Residues 10–18 (IGEGSYGVV) and lysine 33 each bind ATP. The [NKR]KIAxRE signature appears at 45-51 (KKIALRE). Aspartate 126 acts as the Proton acceptor in catalysis.

The protein belongs to the protein kinase superfamily. CMGC Ser/Thr protein kinase family. CDC2/CDKX subfamily.

The protein resides in the cytoplasm. Its subcellular location is the nucleus. It catalyses the reaction L-seryl-[protein] + ATP = O-phospho-L-seryl-[protein] + ADP + H(+). It carries out the reaction L-threonyl-[protein] + ATP = O-phospho-L-threonyl-[protein] + ADP + H(+). The protein is Cyclin-dependent kinase-like 1 of Rattus norvegicus (Rat).